Here is a 255-residue protein sequence, read N- to C-terminus: Type III pantothenate kinase (255 aa).

Residue 6-13 (DVGNTNTV) participates in ATP binding. Substrate is bound by residues Tyr100 and 107–110 (GADR). Asp109 (proton acceptor) is an active-site residue. A K(+)-binding site is contributed by Asp129. Residue Thr132 participates in ATP binding. Position 184 (Thr184) interacts with substrate.

It belongs to the type III pantothenate kinase family. Homodimer. NH4(+) serves as cofactor. Requires K(+) as cofactor.

It is found in the cytoplasm. It carries out the reaction (R)-pantothenate + ATP = (R)-4'-phosphopantothenate + ADP + H(+). Its pathway is cofactor biosynthesis; coenzyme A biosynthesis; CoA from (R)-pantothenate: step 1/5. In terms of biological role, catalyzes the phosphorylation of pantothenate (Pan), the first step in CoA biosynthesis. The sequence is that of Type III pantothenate kinase from Acetivibrio thermocellus (strain ATCC 27405 / DSM 1237 / JCM 9322 / NBRC 103400 / NCIMB 10682 / NRRL B-4536 / VPI 7372) (Clostridium thermocellum).